The following is a 473-amino-acid chain: Cysteine--tRNA ligase (473 aa).

Residue Cys28 participates in Zn(2+) binding. A 'HIGH' region motif is present at residues 30–40 (MTVYDYCHLGH). Cys209, His234, and Glu238 together coordinate Zn(2+). Positions 282–286 (KMSKS) match the 'KMSKS' region motif. Lys285 is a binding site for ATP.

This sequence belongs to the class-I aminoacyl-tRNA synthetase family. Monomer. Zn(2+) serves as cofactor.

The protein resides in the cytoplasm. It catalyses the reaction tRNA(Cys) + L-cysteine + ATP = L-cysteinyl-tRNA(Cys) + AMP + diphosphate. The protein is Cysteine--tRNA ligase of Neisseria gonorrhoeae (strain ATCC 700825 / FA 1090).